We begin with the raw amino-acid sequence, 121 residues long: MIQQESRLVVADNSGAKEALCIRVLGGTRRRYASVGDIIVVSVKSVIPSSDIKKGAVSKAVIVRTKKEVRRPDGSYIRFDDNACVLLNAAGDIRGSRIFGPVARELRGTNMKIVSLAPEVL.

The protein belongs to the universal ribosomal protein uL14 family. In terms of assembly, part of the 50S ribosomal subunit. Forms a cluster with proteins L3 and L19. In the 70S ribosome, L14 and L19 interact and together make contacts with the 16S rRNA in bridges B5 and B8.

In terms of biological role, binds to 23S rRNA. Forms part of two intersubunit bridges in the 70S ribosome. This is Large ribosomal subunit protein uL14 from Porphyromonas gingivalis (strain ATCC 33277 / DSM 20709 / CIP 103683 / JCM 12257 / NCTC 11834 / 2561).